The sequence spans 617 residues: Putative metal ion transporter C17A12.14 (617 aa).

The interval 1-141 is disordered; it reads MPSNTSRSVP…GKNTRDQPSP (141 aa). Phosphoserine is present on Ser-105. Basic and acidic residues predominate over residues 117-136; the sequence is SHPEDIQRKEFETENGKNTR. Ser-152, Ser-162, Ser-226, and Ser-241 each carry phosphoserine. 2 helical membrane-spanning segments follow: residues 560 to 580 and 590 to 610; these read TILG…GMNV and LGWF…SFIL.

The protein belongs to the CorA metal ion transporter (MIT) (TC 1.A.35) family. Interacts with sad1.

It localises to the membrane. This chain is Putative metal ion transporter C17A12.14, found in Schizosaccharomyces pombe (strain 972 / ATCC 24843) (Fission yeast).